The following is a 420-amino-acid chain: Light-independent protochlorophyllide reductase subunit N (420 aa).

Cys-21, Cys-46, and Cys-103 together coordinate [4Fe-4S] cluster.

This sequence belongs to the BchN/ChlN family. As to quaternary structure, protochlorophyllide reductase is composed of three subunits; BchL, BchN and BchB. Forms a heterotetramer of two BchB and two BchN subunits. It depends on [4Fe-4S] cluster as a cofactor.

It carries out the reaction chlorophyllide a + oxidized 2[4Fe-4S]-[ferredoxin] + 2 ADP + 2 phosphate = protochlorophyllide a + reduced 2[4Fe-4S]-[ferredoxin] + 2 ATP + 2 H2O. The protein operates within porphyrin-containing compound metabolism; bacteriochlorophyll biosynthesis (light-independent). Its function is as follows. Component of the dark-operative protochlorophyllide reductase (DPOR) that uses Mg-ATP and reduced ferredoxin to reduce ring D of protochlorophyllide (Pchlide) to form chlorophyllide a (Chlide). This reaction is light-independent. The NB-protein (BchN-BchB) is the catalytic component of the complex. The polypeptide is Light-independent protochlorophyllide reductase subunit N (Chlorobium luteolum (strain DSM 273 / BCRC 81028 / 2530) (Pelodictyon luteolum)).